The chain runs to 371 residues: tRNA-specific 2-thiouridylase MnmA (371 aa).

ATP contacts are provided by residues 7–14 (AMSGGVDS) and leucine 33. The active-site Nucleophile is the cysteine 101. A disulfide bridge links cysteine 101 with cysteine 213. Glycine 125 is an ATP binding site. The interaction with tRNA stretch occupies residues 163-165 (KDQ). The active-site Cysteine persulfide intermediate is cysteine 213.

Belongs to the MnmA/TRMU family.

It localises to the cytoplasm. It catalyses the reaction S-sulfanyl-L-cysteinyl-[protein] + uridine(34) in tRNA + AH2 + ATP = 2-thiouridine(34) in tRNA + L-cysteinyl-[protein] + A + AMP + diphosphate + H(+). In terms of biological role, catalyzes the 2-thiolation of uridine at the wobble position (U34) of tRNA, leading to the formation of s(2)U34. This Roseiflexus castenholzii (strain DSM 13941 / HLO8) protein is tRNA-specific 2-thiouridylase MnmA.